Reading from the N-terminus, the 282-residue chain is MYTLNWQPPYDWSWMLGFLAARAVSSVETVADSYYARSLAVGEYRGVVTAIPDIARHTLHINLSAGLEPVAAECLAKMSRLFDLQCNPQIVNGALGRLGAARPGLRLPGCVDAFEQGVRAILGQLVSVAMAAKLTARVAQLYGERLDDFPEYICFPTPQRLAAADPQALKALGMPLKRAEALIHLANAALEGTLPMTIPGDVEQAMKTLQTFPGIGRWTANYFALRGWQAKDVFLPDDYLIKQRFPGMTPAQIRRYAERWKPWRSYALLHIWYTEGWQPDEA.

Asp238 acts as the Proton acceptor in catalysis.

The protein belongs to the alkylbase DNA glycosidase AlkA family. Monomer.

It carries out the reaction Hydrolysis of alkylated DNA, releasing 3-methyladenine, 3-methylguanine, 7-methylguanine and 7-methyladenine.. Its function is as follows. Hydrolysis of the deoxyribose N-glycosidic bond to excise 3-methyladenine, 3-methylguanine, 7-methylguanine, O2-methylthymine, and O2-methylcytosine from the damaged DNA polymer formed by alkylation lesions. The protein is DNA-3-methyladenine glycosylase 2 (alkA) of Escherichia coli (strain K12).